The sequence spans 454 residues: Bleomycin hydrolase (454 aa).

Met-1 is modified (N-acetylmethionine). Residues Cys-73 and His-372 contribute to the active site. Lys-391 bears the N6-acetyllysine mark. Asn-396 is an active-site residue.

It belongs to the peptidase C1 family. In terms of assembly, homohexamer. Interacts with NUDT12 (via ANK repeats). As to expression, expressed at relatively higher levels in the stomach, esophagus, spleen, thymus and testis, and at lower levels in the skin, lung and skeletal muscle.

The protein localises to the cytoplasm. It is found in the cytoplasmic granule. The catalysed reaction is Inactivates bleomycin B2 (a cytotoxic glycometallopeptide) by hydrolysis of a carboxyamide bond of beta-aminoalanine, but also shows general aminopeptidase activity. The specificity varies somewhat with source, but amino acid arylamides of Met, Leu and Ala are preferred.. Its function is as follows. The normal physiological role of BLM hydrolase is unknown, but it catalyzes the inactivation of the antitumor drug BLM (a glycopeptide) by hydrolyzing the carboxamide bond of its B-aminoalaninamide moiety thus protecting normal and malignant cells from BLM toxicity. Binds single-stranded DNA with higher affinity than double-stranded DNA. May play an important role in the metabolism of antibiotics. This Rattus norvegicus (Rat) protein is Bleomycin hydrolase (Blmh).